Reading from the N-terminus, the 252-residue chain is Ribosomal RNA large subunit methyltransferase E (252 aa).

Gly48, Trp50, Asp68, Asp84, and Asp107 together coordinate S-adenosyl-L-methionine. The active-site Proton acceptor is Lys147. The 59-residue stretch at 194–252 (PVREGDTLEVEIDNLGDEGDGVAKVDGYTLFVSGAEPGDAPEVRVTDVKPRFGFAETLE) folds into the TRAM domain.

The protein belongs to the class I-like SAM-binding methyltransferase superfamily. RNA methyltransferase RlmE family.

The protein resides in the cytoplasm. It carries out the reaction uridine(2552) in 23S rRNA + S-adenosyl-L-methionine = 2'-O-methyluridine(2552) in 23S rRNA + S-adenosyl-L-homocysteine + H(+). Functionally, specifically methylates the uridine in position 2552 of 23S rRNA at the 2'-O position of the ribose in the fully assembled 50S ribosomal subunit. In Natronomonas pharaonis (strain ATCC 35678 / DSM 2160 / CIP 103997 / JCM 8858 / NBRC 14720 / NCIMB 2260 / Gabara) (Halobacterium pharaonis), this protein is Ribosomal RNA large subunit methyltransferase E.